The primary structure comprises 324 residues: Fibronectin type III domain-containing protein 8 (324 aa).

A Fibronectin type-III domain is found at 179 to 280 (PDTPFIFEHT…KPYKFATLAT (102 aa)).

The polypeptide is Fibronectin type III domain-containing protein 8 (FNDC8) (Macaca fascicularis (Crab-eating macaque)).